The primary structure comprises 413 residues: Protein trichome birefringence-like 9 (413 aa).

Residues 22-42 (LFVSLFLLSLLIFSTVVVDVM) form a helical; Signal-anchor for type II membrane protein membrane-spanning segment. The GDS motif signature appears at 141–143 (GDS). The DCXHWCLPGXXDXWN motif motif lies at 384–398 (DCSHWCLPGVPDTWN).

Belongs to the PC-esterase family. TBL subfamily.

It localises to the membrane. Functionally, may act as a bridging protein that binds pectin and other cell wall polysaccharides. Probably involved in maintaining esterification of pectins. May be involved in the specific O-acetylation of cell wall polymers. The sequence is that of Protein trichome birefringence-like 9 (TBL9) from Arabidopsis thaliana (Mouse-ear cress).